The chain runs to 351 residues: S-adenosylmethionine:tRNA ribosyltransferase-isomerase (351 aa).

The protein belongs to the QueA family. As to quaternary structure, monomer.

The protein resides in the cytoplasm. It catalyses the reaction 7-aminomethyl-7-carbaguanosine(34) in tRNA + S-adenosyl-L-methionine = epoxyqueuosine(34) in tRNA + adenine + L-methionine + 2 H(+). It functions in the pathway tRNA modification; tRNA-queuosine biosynthesis. Its function is as follows. Transfers and isomerizes the ribose moiety from AdoMet to the 7-aminomethyl group of 7-deazaguanine (preQ1-tRNA) to give epoxyqueuosine (oQ-tRNA). This Acinetobacter baumannii (strain SDF) protein is S-adenosylmethionine:tRNA ribosyltransferase-isomerase.